Consider the following 500-residue polypeptide: Lysine--tRNA ligase (500 aa).

Mg(2+) contacts are provided by Glu-406 and Glu-413.

It belongs to the class-II aminoacyl-tRNA synthetase family. Homodimer. The cofactor is Mg(2+).

The protein localises to the cytoplasm. The catalysed reaction is tRNA(Lys) + L-lysine + ATP = L-lysyl-tRNA(Lys) + AMP + diphosphate. The polypeptide is Lysine--tRNA ligase (Sulfolobus acidocaldarius (strain ATCC 33909 / DSM 639 / JCM 8929 / NBRC 15157 / NCIMB 11770)).